Reading from the N-terminus, the 336-residue chain is F420-dependent glucose-6-phosphate dehydrogenase (336 aa).

Asp39 is a binding site for coenzyme F420-(gamma-Glu)n. His40 serves as the catalytic Proton donor. Coenzyme F420-(gamma-Glu)n is bound by residues Thr76 and 107–108 (SG). The active-site Proton acceptor is the Glu109. Residues Asn112, 177–178 (GG), and 180–181 (VV) contribute to the coenzyme F420-(gamma-Glu)n site. Thr195, Lys198, Lys259, and Arg283 together coordinate substrate.

Belongs to the F420-dependent glucose-6-phosphate dehydrogenase family. As to quaternary structure, homodimer.

The catalysed reaction is oxidized coenzyme F420-(gamma-L-Glu)(n) + D-glucose 6-phosphate + H(+) = 6-phospho-D-glucono-1,5-lactone + reduced coenzyme F420-(gamma-L-Glu)(n). Catalyzes the coenzyme F420-dependent oxidation of glucose 6-phosphate (G6P) to 6-phosphogluconolactone. This chain is F420-dependent glucose-6-phosphate dehydrogenase, found in Tsukamurella paurometabola (strain ATCC 8368 / DSM 20162 / CCUG 35730 / CIP 100753 / JCM 10117 / KCTC 9821 / NBRC 16120 / NCIMB 702349 / NCTC 13040) (Corynebacterium paurometabolum).